Consider the following 1022-residue polypeptide: Translation initiation factor IF-2 (1022 aa).

Over residues 82–94 (EQSRKTLEKEQHL) the composition is skewed to basic and acidic residues. Disordered stretches follow at residues 82–129 (EQSR…AVPA) and 342–436 (SENK…QREL). Low complexity predominate over residues 104–115 (ASKSSAKGSESA). A compositionally biased stretch (basic residues) spans 375-384 (KAKKGKKKKK). Basic and acidic residues predominate over residues 421–436 (SEREREQEEGAAQREL). The region spanning 519 to 689 (TRPPVVTIMG…LTEAELRELK (171 aa)) is the tr-type G domain. The interval 528–535 (GHVDHGKT) is G1. 528–535 (GHVDHGKT) contacts GTP. Positions 553–557 (GITQH) are G2. A G3 region spans residues 575-578 (DTPG). GTP contacts are provided by residues 575 to 579 (DTPGH) and 629 to 632 (NKID). The interval 629 to 632 (NKID) is G4. The G5 stretch occupies residues 665–667 (SAK).

This sequence belongs to the TRAFAC class translation factor GTPase superfamily. Classic translation factor GTPase family. IF-2 subfamily.

The protein localises to the cytoplasm. Functionally, one of the essential components for the initiation of protein synthesis. Protects formylmethionyl-tRNA from spontaneous hydrolysis and promotes its binding to the 30S ribosomal subunits. Also involved in the hydrolysis of GTP during the formation of the 70S ribosomal complex. This is Translation initiation factor IF-2 from Chlorobium chlorochromatii (strain CaD3).